We begin with the raw amino-acid sequence, 857 residues long: Alanine--tRNA ligase (857 aa).

The Zn(2+) site is built by His556, His560, Cys658, and His662.

This sequence belongs to the class-II aminoacyl-tRNA synthetase family. Zn(2+) is required as a cofactor.

It is found in the cytoplasm. It catalyses the reaction tRNA(Ala) + L-alanine + ATP = L-alanyl-tRNA(Ala) + AMP + diphosphate. In terms of biological role, catalyzes the attachment of alanine to tRNA(Ala) in a two-step reaction: alanine is first activated by ATP to form Ala-AMP and then transferred to the acceptor end of tRNA(Ala). Also edits incorrectly charged Ser-tRNA(Ala) and Gly-tRNA(Ala) via its editing domain. This chain is Alanine--tRNA ligase, found in Sulfurovum sp. (strain NBC37-1).